The primary structure comprises 76 residues: MARGQQKIQSQQKNAKKQAGQKKKQGHDQKAAAKAALIYTCTVCRTQMPDPKTFKQHFESKHPKTPLPPELADVQA.

Residues 1–13 (MARGQQKIQSQQK) show a composition bias toward low complexity. 2 disordered regions span residues 1-32 (MARGQQKIQSQQKNAKKQAGQKKKQGHDQKAA) and 53-76 (TFKQHFESKHPKTPLPPELADVQA). Positions 14–25 (NAKKQAGQKKKQ) are enriched in basic residues. The C2H2-type zinc finger occupies 39–62 (YTCTVCRTQMPDPKTFKQHFESKH). Basic and acidic residues predominate over residues 53–62 (TFKQHFESKH).

Its subcellular location is the cytoplasm. The protein localises to the nucleus. Its function is as follows. Transcription repressor involved in the exit of embryonic stem cells (ESCs) from self-renewal. Acts by repressing expression of KLF4. The polypeptide is Zinc finger protein 706 (Homo sapiens (Human)).